The primary structure comprises 182 residues: Peptidyl-tRNA hydrolase (182 aa).

Tyr14 contacts tRNA. His19 (proton acceptor) is an active-site residue. TRNA is bound by residues Tyr65, Asn67, and Asn113.

It belongs to the PTH family. In terms of assembly, monomer.

It is found in the cytoplasm. The enzyme catalyses an N-acyl-L-alpha-aminoacyl-tRNA + H2O = an N-acyl-L-amino acid + a tRNA + H(+). Functionally, hydrolyzes ribosome-free peptidyl-tRNAs (with 1 or more amino acids incorporated), which drop off the ribosome during protein synthesis, or as a result of ribosome stalling. Its function is as follows. Catalyzes the release of premature peptidyl moieties from peptidyl-tRNA molecules trapped in stalled 50S ribosomal subunits, and thus maintains levels of free tRNAs and 50S ribosomes. The protein is Peptidyl-tRNA hydrolase of Rickettsia peacockii (strain Rustic).